Consider the following 484-residue polypeptide: tRNA sulfurtransferase (484 aa).

A THUMP domain is found at 63–167 (REMIERLCCT…DQRLFVVHRQ (105 aa)). ATP-binding positions include 185–186 (LM), Lys-267, Gly-289, and Gln-298. Residues Cys-346 and Cys-457 are joined by a disulfide bond. In terms of domain architecture, Rhodanese spans 405–483 (ALAGQIVLDI…GHANVRVYRP (79 aa)). The active-site Cysteine persulfide intermediate is the Cys-457.

Belongs to the ThiI family.

The protein localises to the cytoplasm. The enzyme catalyses [ThiI sulfur-carrier protein]-S-sulfanyl-L-cysteine + a uridine in tRNA + 2 reduced [2Fe-2S]-[ferredoxin] + ATP + H(+) = [ThiI sulfur-carrier protein]-L-cysteine + a 4-thiouridine in tRNA + 2 oxidized [2Fe-2S]-[ferredoxin] + AMP + diphosphate. It catalyses the reaction [ThiS sulfur-carrier protein]-C-terminal Gly-Gly-AMP + S-sulfanyl-L-cysteinyl-[cysteine desulfurase] + AH2 = [ThiS sulfur-carrier protein]-C-terminal-Gly-aminoethanethioate + L-cysteinyl-[cysteine desulfurase] + A + AMP + 2 H(+). The protein operates within cofactor biosynthesis; thiamine diphosphate biosynthesis. Functionally, catalyzes the ATP-dependent transfer of a sulfur to tRNA to produce 4-thiouridine in position 8 of tRNAs, which functions as a near-UV photosensor. Also catalyzes the transfer of sulfur to the sulfur carrier protein ThiS, forming ThiS-thiocarboxylate. This is a step in the synthesis of thiazole, in the thiamine biosynthesis pathway. The sulfur is donated as persulfide by IscS. The polypeptide is tRNA sulfurtransferase (Azotobacter vinelandii (strain DJ / ATCC BAA-1303)).